Consider the following 77-residue polypeptide: MEVKVFRVSGYFEKDGRKFKFTKEYRALKEEHVKELVYSDIGSRHKVKRRKIFIKEIREIKPEEAEDIVVRRLSLEL.

This sequence belongs to the eukaryotic ribosomal protein eL20 family. Part of the 50S ribosomal subunit. Binds 23S rRNA.

This Pyrococcus horikoshii (strain ATCC 700860 / DSM 12428 / JCM 9974 / NBRC 100139 / OT-3) protein is Large ribosomal subunit protein eL20.